Consider the following 288-residue polypeptide: MSIKIENLTHVYMQETPFEKKAIDDVNLEIKNGEFIALIGHTGSGKSTLIQHINGLLKPHSGRIIIDDIDITKKEVKMSEIRKKVGLVFQYPEYQLFEETIEKDIAFGPKNLNLSEEEINKRIKRAMNIVGLDYEKYRDKSPFELSGGQKRRVAIAGVVAMEPEVLILDEPTAGLDPKGRDEILGEIKDLHKEYNMTIILVSHSMEDVAKLATRVLVMHKGKCILDGEPSQVFNEVDTLESVGLAAPQVTYLMRSLKEKGFNISENIFTIEQAKKELLKIFNNKATNC.

An ABC transporter domain is found at 3-245 (IKIENLTHVY…VDTLESVGLA (243 aa)). 40-47 (GHTGSGKS) contacts ATP.

The protein belongs to the ABC transporter superfamily. Energy-coupling factor EcfA family. As to quaternary structure, forms a stable energy-coupling factor (ECF) transporter complex composed of 2 membrane-embedded substrate-binding proteins (S component), 2 ATP-binding proteins (A component) and 2 transmembrane proteins (T component).

It localises to the cell membrane. Its function is as follows. ATP-binding (A) component of a common energy-coupling factor (ECF) ABC-transporter complex. Unlike classic ABC transporters this ECF transporter provides the energy necessary to transport a number of different substrates. In Clostridium tetani (strain Massachusetts / E88), this protein is Energy-coupling factor transporter ATP-binding protein EcfA2.